A 1381-amino-acid chain; its full sequence is DNA-directed RNA polymerase subunit beta'' (1381 aa).

4 residues coordinate Zn(2+): Cys-224, Cys-295, Cys-302, and Cys-305.

Belongs to the RNA polymerase beta' chain family. RpoC2 subfamily. In plastids the minimal PEP RNA polymerase catalytic core is composed of four subunits: alpha, beta, beta', and beta''. When a (nuclear-encoded) sigma factor is associated with the core the holoenzyme is formed, which can initiate transcription. Zn(2+) serves as cofactor.

Its subcellular location is the plastid. It localises to the chloroplast. It carries out the reaction RNA(n) + a ribonucleoside 5'-triphosphate = RNA(n+1) + diphosphate. DNA-dependent RNA polymerase catalyzes the transcription of DNA into RNA using the four ribonucleoside triphosphates as substrates. The chain is DNA-directed RNA polymerase subunit beta'' from Guizotia abyssinica (Niger).